A 454-amino-acid chain; its full sequence is tRNA modification GTPase MnmE (454 aa).

(6S)-5-formyl-5,6,7,8-tetrahydrofolate-binding residues include Arg23, Glu80, and Lys120. The region spanning 216–377 (GMKVVIAGRP…LRNHLKQSMG (162 aa)) is the TrmE-type G domain. Position 226 (Asn226) interacts with K(+). GTP contacts are provided by residues 226–231 (NAGKSS), 245–251 (TDIAGTT), 270–273 (DTAG), 335–338 (NKAD), and 358–360 (SAR). Ser230 contacts Mg(2+). 3 residues coordinate K(+): Thr245, Ile247, and Thr250. Thr251 lines the Mg(2+) pocket. Position 454 (Lys454) interacts with (6S)-5-formyl-5,6,7,8-tetrahydrofolate.

This sequence belongs to the TRAFAC class TrmE-Era-EngA-EngB-Septin-like GTPase superfamily. TrmE GTPase family. Homodimer. Heterotetramer of two MnmE and two MnmG subunits. Requires K(+) as cofactor.

The protein resides in the cytoplasm. In terms of biological role, exhibits a very high intrinsic GTPase hydrolysis rate. Involved in the addition of a carboxymethylaminomethyl (cmnm) group at the wobble position (U34) of certain tRNAs, forming tRNA-cmnm(5)s(2)U34. This chain is tRNA modification GTPase MnmE, found in Escherichia coli O17:K52:H18 (strain UMN026 / ExPEC).